Reading from the N-terminus, the 539-residue chain is Probable malate:quinone oxidoreductase (539 aa).

The protein belongs to the MQO family. The cofactor is FAD.

The enzyme catalyses (S)-malate + a quinone = a quinol + oxaloacetate. It functions in the pathway carbohydrate metabolism; tricarboxylic acid cycle; oxaloacetate from (S)-malate (quinone route): step 1/1. This Sodalis glossinidius (strain morsitans) protein is Probable malate:quinone oxidoreductase.